A 547-amino-acid chain; its full sequence is Carboxypeptidase N subunit 2 (547 aa).

The N-terminal stretch at methionine 1–proline 21 is a signal peptide. An LRRNT domain is found at cysteine 22–proline 49. Residues asparagine 74, asparagine 111, and asparagine 119 are each glycosylated (N-linked (GlcNAc...) asparagine). LRR repeat units follow at residues arginine 98 to asparagine 119, serine 122 to histidine 143, isoleucine 146 to serine 167, aspartate 170 to serine 191, glycine 194 to serine 215, serine 218 to glutamine 239, serine 242 to serine 263, asparagine 266 to histidine 287, glycine 290 to asparagine 311, arginine 314 to asparagine 335, glutamine 338 to asparagine 359, and arginine 362 to threonine 383. Residues asparagine 266 and asparagine 311 are each glycosylated (N-linked (GlcNAc...) asparagine). Residues asparagine 348, asparagine 359, and asparagine 367 are each glycosylated (N-linked (GlcNAc...) asparagine). In terms of domain architecture, LRRCT spans asparagine 395–valine 447. N-linked (GlcNAc...) asparagine glycosylation occurs at asparagine 520.

As to quaternary structure, tetramer of two catalytic chains and two glycosylated inactive chains.

It localises to the secreted. In terms of biological role, the 83 kDa subunit binds and stabilizes the catalytic subunit at 37 degrees Celsius and keeps it in circulation. Under some circumstances it may be an allosteric modifier of the catalytic subunit. The polypeptide is Carboxypeptidase N subunit 2 (Cpn2) (Mus musculus (Mouse)).